The sequence spans 1193 residues: Chloride channel protein 2 (1193 aa).

Residues 1–168 (MVYFGDRQRD…WIWRHTVARL (168 aa)) are Cytoplasmic-facing. The interval 76 to 97 (SHAFYPCPPPAENARDSDSSDD) is disordered. A run of 2 helical transmembrane segments spans residues 169 to 204 (GEDW…IWLY) and 213 to 236 (VQYI…VHLI). Residues 242 to 246 (GSGIP) carry the Selectivity filter part_1 motif. S243 provides a ligand contact to chloride. Residues 245 to 252 (IPEMKTIL) constitute an intramembrane region (helical). The next 2 helical transmembrane spans lie at 261–279 (LTFK…TLGS) and 286–304 (EGPF…SKLV). Residues 284–288 (GKEGP) carry the Selectivity filter part_2 motif. Intramembrane regions (helical) lie at residues 320–332 (MLAA…VGAC) and 336–344 (PVGGVLFSI). The next 5 helical transmembrane spans lie at 356–373 (YWRG…FRLL), 402–430 (LFVF…VLFM), 439–458 (FLQK…VSSI), 511–530 (FGNL…IAST), and 536–555 (GMFI…VGEF). The Selectivity filter part_3 motif lies at 536–540 (GMFIP). Residue F538 participates in chloride binding. The helical intramembrane region spans 576 to 590 (GGYAVVGAAAFSGSV). An intramembrane region (note=Loop between two helices) is located at residues 591 to 592 (TH). Positions 593–604 (TVSVAVIIFEMT) form an intramembrane region, helical. Positions 605–609 (GQITH) form an intramembrane region, note=Loop between two helices. The helical transmembrane segment at 610 to 626 (VVPVMIAVLVANAVAAL) threads the bilayer. The Cytoplasmic segment spans residues 627 to 1193 (LQPSIYDSII…KSNTENGNHA (567 aa)). Y632 is a binding site for chloride. The CBS 1 domain maps to 663–723 (MVRDVKYIWH…KMIEKHIGRE (61 aa)). 3 disordered regions span residues 848–884 (TLQD…VSKK), 1103–1122 (NSFV…AVEK), and 1159–1193 (IKHT…GNHA). The CBS 2 domain maps to 1048 to 1105 (IDPSPFQLVERTSILKVHSLFSMVGINHAYVTKIGRLVGVVGLKELRKAIEDINSNSF). Polar residues predominate over residues 1165 to 1193 (GTVSLTMPPQESKQSPSADKSNTENGNHA).

The protein belongs to the chloride channel (TC 2.A.49) family. In terms of tissue distribution, at embryonic stages 13-16, expressed in a subset of the midline cells of the midline primordium and in all of the midline glia. Expressed along the Z-line of the sarcomere in larval longitudinal muscles.

It localises to the membrane. Voltage-gated chloride channel. Chloride channels have several functions including the regulation of cell volume; membrane potential stabilization, signal transduction and transepithelial transport. This chain is Chloride channel protein 2 (ClC-a), found in Drosophila melanogaster (Fruit fly).